We begin with the raw amino-acid sequence, 811 residues long: DNA mismatch repair protein MutS (811 aa).

583 to 590 (GPNMAGKS) serves as a coordination point for ATP.

It belongs to the DNA mismatch repair MutS family.

In terms of biological role, this protein is involved in the repair of mismatches in DNA. It is possible that it carries out the mismatch recognition step. This protein has a weak ATPase activity. The protein is DNA mismatch repair protein MutS of Thermus thermophilus (strain ATCC BAA-163 / DSM 7039 / HB27).